The following is a 469-amino-acid chain: 3-isopropylmalate dehydratase large subunit (469 aa).

Positions 346, 406, and 409 each coordinate [4Fe-4S] cluster.

It belongs to the aconitase/IPM isomerase family. LeuC type 1 subfamily. In terms of assembly, heterodimer of LeuC and LeuD. The cofactor is [4Fe-4S] cluster.

It catalyses the reaction (2R,3S)-3-isopropylmalate = (2S)-2-isopropylmalate. The protein operates within amino-acid biosynthesis; L-leucine biosynthesis; L-leucine from 3-methyl-2-oxobutanoate: step 2/4. Catalyzes the isomerization between 2-isopropylmalate and 3-isopropylmalate, via the formation of 2-isopropylmaleate. The chain is 3-isopropylmalate dehydratase large subunit from Lysinibacillus sphaericus (strain C3-41).